Consider the following 61-residue polypeptide: Temporin-SN2 (61 aa).

A signal peptide spans methionine 1 to cysteine 22. Positions glutamate 23–lysine 44 are cleaved as a propeptide — removed in mature form. Lysine 61 carries the post-translational modification Lysine amide.

This sequence belongs to the frog skin active peptide (FSAP) family. Temporin subfamily. As to expression, expressed by the skin glands.

It localises to the secreted. In terms of biological role, antimicrobial peptide. Active against some Gram-positive and Gram-negative bacterial strains. Active against fungus C.glabrata 090902 but not against C.albicans ATCC 12231. Shows very weak hemolytic activity against human erythrocytes. This Sylvirana spinulosa (Fine-spined frog) protein is Temporin-SN2.